The primary structure comprises 124 residues: Ribonuclease P protein component 2 (124 aa).

The protein belongs to the eukaryotic/archaeal RNase P protein component 2 family. As to quaternary structure, consists of a catalytic RNA component and at least 4-5 protein subunits.

The protein localises to the cytoplasm. It carries out the reaction Endonucleolytic cleavage of RNA, removing 5'-extranucleotides from tRNA precursor.. Part of ribonuclease P, a protein complex that generates mature tRNA molecules by cleaving their 5'-ends. The protein is Ribonuclease P protein component 2 of Methanothermobacter thermautotrophicus (strain ATCC 29096 / DSM 1053 / JCM 10044 / NBRC 100330 / Delta H) (Methanobacterium thermoautotrophicum).